The chain runs to 208 residues: Fucoxanthin-chlorophyll a-c binding protein, chloroplastic (208 aa).

Residues 1–31 (MMTLASLPSTAIAGLASAAPKVQPRMAANDE) constitute a chloroplast transit peptide. Residues 102-118 (IPQLPYWLWIVMTIGIG) traverse the membrane as a helical segment.

It belongs to the fucoxanthin chlorophyll protein family. The LHC complex of chromophytic algae is composed of fucoxanthin, chlorophyll A and C bound non-covalently by fucoxanthin chlorophyll proteins (FCPs). The ratio of pigments in this LHC is; fucoxanthin: chlorophyll C: chlorophyll A; (0.6-1): (0.1-0.3): (1).

It localises to the plastid. It is found in the chloroplast thylakoid membrane. Its function is as follows. The light-harvesting complex (LHC) functions as a light receptor, it captures and delivers excitation energy to photosystems with which it is closely associated. Energy is transferred from the carotenoid and chlorophyll C (or B) to chlorophyll A and the photosynthetic reaction centers where it is used to synthesize ATP and reducing power. The polypeptide is Fucoxanthin-chlorophyll a-c binding protein, chloroplastic (FCP) (Isochrysis galbana (Marine planktonic alga)).